A 519-amino-acid polypeptide reads, in one-letter code: FAD-dependent monooxygenase macF (519 aa).

A signal peptide spans 1–20 (MTKMTSIIGILMGVLTTATA). The 175-residue stretch at 88 to 262 (CRLNASCIVT…TEYDLTTNTG (175 aa)) folds into the FAD-binding PCMH-type domain. The residue at position 125 (His125) is a Pros-8alpha-FAD histidine.

Belongs to the oxygen-dependent FAD-linked oxidoreductase family.

The protein operates within secondary metabolite biosynthesis; terpenoid biosynthesis. FAD-dependent monooxygenase; part of the gene cluster that mediates the biosynthesis of macrophorins, isoprenoid epoxycyclohexenones containing cyclized drimane moieties. The first step of the pathway is the synthesis of 6-methylsalicylic acid (6-MSA) by the polyketide synthase macA. 6-MSA is then converted to m-cresol by the decarboxylase macB. The cytochrome P450 monooxygenase macC then catalyzes the oxidation of m-cresol to toluquinol. Epoxidation of toluquinol is then performed by the short chain dehydrogenase macD, with the help of macE, and a further prenylation by macG leads to 7-deacetoxyyanuthone A. The next step is the hydroxylation of C-22 of 7-deacetoxyyanuthone A by the cytochrome P450 monooxygenase macH to yield 22-deacetylyanuthone A. O-Mevalon transferase macI then attaches mevalon to the hydroxyl group of 22-deacetylyanuthone A to produce yanuthone E. The terpene cyclase macJ catalyzes the cyclization of 22-deacetylyanuthone A to macrophorin A. MacJ is also able to catalyze cyclization of yanuthone E and 7-deacetoxyyanuthone A to their corresponding macrophorins. The macJ products can be further modified by macH and macJ, as well as by the FAD-dependent monooxygenase macF, to produce additional macrophorins, including 4'-oxomacrophorin A, 4'-oxomacrophorin D and 4'-oxomacrophorin E. In Penicillium terrestre, this protein is FAD-dependent monooxygenase macF.